The chain runs to 537 residues: Prolyl 4-hydroxylase subunit alpha-2 (537 aa).

Residues 1–23 (MKLQVLVLVLLMSWFGVLSWVQA) form the signal peptide. Asn117 is a glycosylation site (N-linked (GlcNAc...) asparagine). Residues 209–242 (SLVLDYLSYAVFQLGDLHRAVELTRRLLSLDPSH) form a TPR repeat. Residue Asn266 is glycosylated (N-linked (GlcNAc...) asparagine). The 109-residue stretch at 414-522 (TAELLQVANY…KWVSNKWFHE (109 aa)) folds into the Fe2OG dioxygenase domain. His432 and Asp434 together coordinate Fe cation. An N6-succinyllysine modification is found at Lys482. Position 503 (His503) interacts with Fe cation. A 2-oxoglutarate-binding site is contributed by Lys513.

Belongs to the P4HA family. In terms of assembly, heterotetramer of two alpha-2 chains and two beta chains (P4HB) (the beta chain is the multi-functional PDI), where P4HB plays the role of a structural subunit; this tetramer catalyzes the formation of 4-hydroxyproline in collagen. Fe(2+) is required as a cofactor. Requires L-ascorbate as cofactor. As to expression, expressed at least in brain, heart and lung.

It is found in the endoplasmic reticulum lumen. It carries out the reaction L-prolyl-[collagen] + 2-oxoglutarate + O2 = trans-4-hydroxy-L-prolyl-[collagen] + succinate + CO2. Its activity is regulated as follows. Inhibited by poly(L-proline) only at very high concentrations. Functionally, catalyzes the post-translational formation of 4-hydroxyproline in -Xaa-Pro-Gly- sequences in collagens and other proteins. The protein is Prolyl 4-hydroxylase subunit alpha-2 (P4ha2) of Mus musculus (Mouse).